The chain runs to 466 residues: Ribulose bisphosphate carboxylase large chain (466 aa).

At lysine 5 the chain carries N6,N6,N6-trimethyllysine. Residues asparagine 114 and threonine 164 each coordinate substrate. The active-site Proton acceptor is lysine 166. Lysine 168 lines the substrate pocket. Lysine 192, aspartate 194, and glutamate 195 together coordinate Mg(2+). Lysine 192 carries the post-translational modification N6-carboxylysine. The active-site Proton acceptor is the histidine 285. 3 residues coordinate substrate: arginine 286, histidine 318, and serine 370.

Belongs to the RuBisCO large chain family. Type I subfamily. In terms of assembly, heterohexadecamer of 8 large chains and 8 small chains; disulfide-linked. The disulfide link is formed within the large subunit homodimers. The cofactor is Mg(2+). Post-translationally, the disulfide bond which can form in the large chain dimeric partners within the hexadecamer appears to be associated with oxidative stress and protein turnover.

The protein localises to the plastid. Its subcellular location is the chloroplast. The catalysed reaction is 2 (2R)-3-phosphoglycerate + 2 H(+) = D-ribulose 1,5-bisphosphate + CO2 + H2O. It catalyses the reaction D-ribulose 1,5-bisphosphate + O2 = 2-phosphoglycolate + (2R)-3-phosphoglycerate + 2 H(+). Functionally, ruBisCO catalyzes two reactions: the carboxylation of D-ribulose 1,5-bisphosphate, the primary event in carbon dioxide fixation, as well as the oxidative fragmentation of the pentose substrate in the photorespiration process. Both reactions occur simultaneously and in competition at the same active site. The protein is Ribulose bisphosphate carboxylase large chain of Cucurbita pepo (Vegetable marrow).